Here is a 316-residue protein sequence, read N- to C-terminus: 4-hydroxy-3-methylbut-2-enyl diphosphate reductase (316 aa).

C12 is a binding site for [4Fe-4S] cluster. Residues H41 and H74 each coordinate (2E)-4-hydroxy-3-methylbut-2-enyl diphosphate. H41 and H74 together coordinate dimethylallyl diphosphate. H41 and H74 together coordinate isopentenyl diphosphate. [4Fe-4S] cluster is bound at residue C96. A (2E)-4-hydroxy-3-methylbut-2-enyl diphosphate-binding site is contributed by H124. Residue H124 participates in dimethylallyl diphosphate binding. Residue H124 coordinates isopentenyl diphosphate. E126 acts as the Proton donor in catalysis. Residue T169 participates in (2E)-4-hydroxy-3-methylbut-2-enyl diphosphate binding. C199 provides a ligand contact to [4Fe-4S] cluster. 4 residues coordinate (2E)-4-hydroxy-3-methylbut-2-enyl diphosphate: S227, S228, N229, and S271. Residues S227, S228, N229, and S271 each contribute to the dimethylallyl diphosphate site. Residues S227, S228, N229, and S271 each coordinate isopentenyl diphosphate.

It belongs to the IspH family. It depends on [4Fe-4S] cluster as a cofactor.

It carries out the reaction isopentenyl diphosphate + 2 oxidized [2Fe-2S]-[ferredoxin] + H2O = (2E)-4-hydroxy-3-methylbut-2-enyl diphosphate + 2 reduced [2Fe-2S]-[ferredoxin] + 2 H(+). The enzyme catalyses dimethylallyl diphosphate + 2 oxidized [2Fe-2S]-[ferredoxin] + H2O = (2E)-4-hydroxy-3-methylbut-2-enyl diphosphate + 2 reduced [2Fe-2S]-[ferredoxin] + 2 H(+). Its pathway is isoprenoid biosynthesis; dimethylallyl diphosphate biosynthesis; dimethylallyl diphosphate from (2E)-4-hydroxy-3-methylbutenyl diphosphate: step 1/1. It functions in the pathway isoprenoid biosynthesis; isopentenyl diphosphate biosynthesis via DXP pathway; isopentenyl diphosphate from 1-deoxy-D-xylulose 5-phosphate: step 6/6. Catalyzes the conversion of 1-hydroxy-2-methyl-2-(E)-butenyl 4-diphosphate (HMBPP) into a mixture of isopentenyl diphosphate (IPP) and dimethylallyl diphosphate (DMAPP). Acts in the terminal step of the DOXP/MEP pathway for isoprenoid precursor biosynthesis. The sequence is that of 4-hydroxy-3-methylbut-2-enyl diphosphate reductase from Xanthomonas axonopodis pv. citri (strain 306).